Reading from the N-terminus, the 100-residue chain is Large ribosomal subunit protein uL23 (100 aa).

This sequence belongs to the universal ribosomal protein uL23 family. Part of the 50S ribosomal subunit. Contacts protein L29, and trigger factor when it is bound to the ribosome.

In terms of biological role, one of the early assembly proteins it binds 23S rRNA. One of the proteins that surrounds the polypeptide exit tunnel on the outside of the ribosome. Forms the main docking site for trigger factor binding to the ribosome. In Shewanella halifaxensis (strain HAW-EB4), this protein is Large ribosomal subunit protein uL23.